Reading from the N-terminus, the 649-residue chain is DNA mismatch repair protein MutL (649 aa).

Belongs to the DNA mismatch repair MutL/HexB family.

In terms of biological role, this protein is involved in the repair of mismatches in DNA. It is required for dam-dependent methyl-directed DNA mismatch repair. May act as a 'molecular matchmaker', a protein that promotes the formation of a stable complex between two or more DNA-binding proteins in an ATP-dependent manner without itself being part of a final effector complex. In Streptococcus pneumoniae (strain P1031), this protein is DNA mismatch repair protein MutL.